We begin with the raw amino-acid sequence, 516 residues long: MTALDTDTPTAGRSAPLISPGPVIPPPDFGPLDRAQGWAMTAIITALAAITRFLNLGSPTDAGTPIFDEKHYAPQAWQVLHNDGVEDNPGYGLVVHPPVGKQLIAIGEWLFGYNGLGWRFSGAVCGVIIVMLVTRIARRISRSTLVGAIAGLLIIADGVSFVSSRTALLDVFLVMFAVAAFACLMVDRDQVRERMYHAFLDGRIAETRWGTRLGVRWWRFGAGVLLGLACATKWSGLYFVLFFGVMTLVFDAIARKQYHVPHPWRGMLRRDLGPAAYVFGLIPFAVYLASYAPWFASETAVNRYEVGRSIGPDSILPIPDALRSLWHYTHAAYRFHSNLTNADGNHHPWESKPWTWPMSLRPVLYAIDNQDVPGCGAQSCVKAVMLVGTPAMWFIAVPVLGWALWRTVVRRDWRYGAVLVGYMAGFLPWFADIDRQMYFFYATVMAPFLVLAIALILGDILYKPNQNPERRTLGLLTVCFYVALVITNFAWMYPILTGLPISQTTWNLQIWLPSWR.

9 helical membrane-spanning segments follow: residues 113-133, 143-163, 166-186, 234-254, 275-295, 384-404, 413-433, 437-457, and 473-493; these read YNGL…VMLV, STLV…SFVS, TALL…CLMV, WSGL…DAIA, AAYV…APWF, VMLV…GWAL, WRYG…FADI, MYFF…ALIL, and LGLL…AWMY.

Belongs to the glycosyltransferase 39 family.

Its subcellular location is the cell membrane. It participates in protein modification; protein glycosylation. Functionally, protein O-mannosyltransferase that catalyzes the transfer of a single mannose residue from a polyprenol phospho-mannosyl lipidic donor to the hydroxyl group of selected serine and threonine residues in acceptor proteins. This is Polyprenol-phosphate-mannose--protein mannosyltransferase from Mycolicibacterium smegmatis (strain ATCC 700084 / mc(2)155) (Mycobacterium smegmatis).